Reading from the N-terminus, the 984-residue chain is Probable serine/threonine-protein kinase ireA (984 aa).

The N-terminal stretch at 1 to 26 (MTFSKTRNKIIFLLFLIIINIFNINA) is a signal peptide. The Extracellular portion of the chain corresponds to 27–436 (YIKDENEDDL…NDLLDSNKLK (410 aa)). 2 disordered regions span residues 70–91 (YSTSQFDRKQQQSTSTSTEITK) and 137–157 (EDKSSTSSTSTTSESSKDENK). Low complexity-rich tracts occupy residues 82-91 (STSTSTEITK) and 141-150 (STSSTSTTSE). Residue N228 is glycosylated (N-linked (GlcNAc...) asparagine). Positions 352–427 (SPPSNNNNNN…GANNNNNNNN (76 aa)) are disordered. Residues 356 to 397 (NNNNNNNNNNNNNNNNNNNNNNNNNNNNNNNNNNKNNNNNNK) are compositionally biased toward low complexity. N-linked (GlcNAc...) asparagine glycosylation is present at N398. Residues 437 to 457 (NYDIYLYSSIVILITSIIVFI) traverse the membrane as a helical segment. The Cytoplasmic portion of the chain corresponds to 458–984 (RSKKNFNLIN…NDQYFVQYYY (527 aa)). The stretch at 467 to 533 (NVNNNNNQNN…NDLIDEFIST (67 aa)) forms a coiled coil. A compositionally biased stretch (low complexity) spans 472-489 (NNQNNNQNSNQNNNINNK). A disordered region spans residues 472–518 (NNQNNNQNSNQNNNINNKKTPKKKKKKQKNKNNKNNNDEDDENEIEN). Residues 490–503 (KTPKKKKKKQKNKN) show a composition bias toward basic residues. The span at 509-518 (DEDDENEIEN) shows a compositional bias: acidic residues. Residues 575–851 (IITNKILGTG…IGECINHPFF (277 aa)) enclose the Protein kinase domain. ATP contacts are provided by residues 581 to 589 (LGTGSCGTI) and K603. A compositionally biased stretch (polar residues) spans 667–676 (PTDSPSIQSS). Residues 667-692 (PTDSPSIQSSNNNGNGNNGNNNNNNQ) form a disordered region. A compositionally biased stretch (low complexity) spans 677–691 (NNNGNGNNGNNNNNN). The Proton acceptor role is filled by D722. In terms of domain architecture, KEN spans 854–984 (VHKKLSFLVA…NDQYFVQYYY (131 aa)).

This sequence belongs to the protein kinase superfamily. Ser/Thr protein kinase family.

It is found in the membrane. The enzyme catalyses L-seryl-[protein] + ATP = O-phospho-L-seryl-[protein] + ADP + H(+). It carries out the reaction L-threonyl-[protein] + ATP = O-phospho-L-threonyl-[protein] + ADP + H(+). The protein is Probable serine/threonine-protein kinase ireA (ireA) of Dictyostelium discoideum (Social amoeba).